A 95-amino-acid polypeptide reads, in one-letter code: Co-chaperonin GroES (95 aa).

The protein belongs to the GroES chaperonin family. As to quaternary structure, heptamer of 7 subunits arranged in a ring. Interacts with the chaperonin GroEL.

Its subcellular location is the cytoplasm. In terms of biological role, together with the chaperonin GroEL, plays an essential role in assisting protein folding. The GroEL-GroES system forms a nano-cage that allows encapsulation of the non-native substrate proteins and provides a physical environment optimized to promote and accelerate protein folding. GroES binds to the apical surface of the GroEL ring, thereby capping the opening of the GroEL channel. The chain is Co-chaperonin GroES from Geobacter metallireducens (strain ATCC 53774 / DSM 7210 / GS-15).